A 209-amino-acid chain; its full sequence is Uracil phosphoribosyltransferase (209 aa).

5-phospho-alpha-D-ribose 1-diphosphate contacts are provided by residues Arg-79, Arg-104, and 131-139 (DPMLATGGS). Residues Ile-194 and 199–201 (GDA) each bind uracil. Asp-200 is a binding site for 5-phospho-alpha-D-ribose 1-diphosphate.

The protein belongs to the UPRTase family. The cofactor is Mg(2+).

The enzyme catalyses UMP + diphosphate = 5-phospho-alpha-D-ribose 1-diphosphate + uracil. It functions in the pathway pyrimidine metabolism; UMP biosynthesis via salvage pathway; UMP from uracil: step 1/1. Allosterically activated by GTP. Its function is as follows. Catalyzes the conversion of uracil and 5-phospho-alpha-D-ribose 1-diphosphate (PRPP) to UMP and diphosphate. The polypeptide is Uracil phosphoribosyltransferase (Finegoldia magna (strain ATCC 29328 / DSM 20472 / WAL 2508) (Peptostreptococcus magnus)).